A 1151-amino-acid chain; its full sequence is Sterol regulatory element-binding protein 1 (1151 aa).

Residues 1–59 form a transcriptional activation (acidic) region; it reads MDEPPFTEAALEQALAEPCELDAALLTDIEDMLQLINNQDSDFPGLFDAPYAGVAGGTD. At 1-487 the chain is on the cytoplasmic side; the sequence is MDEPPFTEAA…HGRGMLDRSR (487 aa). A 9aaTAD motif is present at residues 27 to 35; sequence TDIEDMLQL. Disordered regions lie at residues 39–125 and 164–184; these read QDSD…IKEE and GYPS…TSQT. Over residues 57 to 69 the composition is skewed to low complexity; it reads GTDPTSPDASSPG. Pro residues predominate over residues 91–105; it reads TPPPPPVSPTQPAPT. Phosphoserine occurs at positions 98 and 117. Residues 170-184 are compositionally biased toward polar residues; sequence GSFSSATPPGSTSQT. Positions 234–497 are interaction with LMNA; the sequence is QQVPVLLQPH…LALCVLVFLC (264 aa). One can recognise a bHLH domain in the interval 324-374; it reads EKRTAHNAIEKRYRSSINDKIIELKDLVVGTEAKLNKSAVLRKAIDYIRFL. Residues Ser338 and Ser339 each carry the phosphoserine; by SIK1 modification. The tract at residues 374-396 is leucine-zipper; the sequence is LQQSNQKLKQENLSLRTAAHKSK. Ser397 bears the Phosphoserine; by AMPK mark. Residues 399-479 are disordered; it reads KDLVSCSSGG…KPEQLPAPHG (81 aa). Position 403 is a phosphoserine; by SIK1 (Ser403). Residues 431-448 are compositionally biased toward low complexity; it reads DAGSPSQSSPLSLGSRGS. The residue at position 457 (Ser457) is a Phosphoserine. A helical membrane pass occupies residues 488 to 508; the sequence is LALCVLVFLCLSCNPLASLMG. The Lumenal portion of the chain corresponds to 509 to 547; the sequence is SWALPGPSDATSAYHGPWRSVLGAEGRDGPGWVLWLLPP. The chain crosses the membrane as a helical span at residues 548 to 568; that stretch reads LVWLTNGLLVLLFLALLFVYG. The Cytoplasmic segment spans residues 569–1151; sequence EPVTRPHSDP…LGGGTTVTSS (583 aa). Residues 987–1006 form a disordered region; sequence RQKPPPPSQASQGSSSGAQA. The segment covering 995–1006 has biased composition (low complexity); it reads QASQGSSSGAQA. Ser1060 bears the Phosphoserine mark.

Belongs to the SREBP family. Efficient DNA binding of the soluble transcription factor fragment requires dimerization with another bHLH protein. Interacts with CEBPA, the interaction produces a transcriptional synergy. Interacts with LMNA. As to quaternary structure, forms a tight complex with SCAP, the SCAP-SREBP complex, in the endoplasmic reticulum membrane and the Golgi apparatus. Interacts with PAQR3; the interaction anchors the SCAP-SREBP complex to the Golgi apparatus in low cholesterol conditions. Post-translationally, processed in the Golgi apparatus, releasing the protein from the membrane. At low cholesterol the SCAP-SREBP complex is recruited into COPII vesicles for export from the endoplasmic reticulum. In the Golgi, complex SREBPs are cleaved sequentially by site-1 (MBTPS1, S1P) and site-2 (MBTPS2, S2P) proteases. The first cleavage by site-1 protease occurs within the luminal loop, the second cleavage by site-2 protease occurs within the first transmembrane domain, releasing the transcription factor from the Golgi membrane. Phosphorylated by AMPK, leading to suppress protein processing and nuclear translocation, and repress target gene expression. Phosphorylation at Ser-403 by SIK1 represses activity possibly by inhibiting DNA-binding. In terms of processing, SCAP-free SREBF1 is ubiquitinated by the BCR(ARMC5) complex, leading to its degradation. Post-translationally, ubiquitinated; the nuclear form has a rapid turnover and is rapidly ubiquitinated and degraded by the proteasome in the nucleus.

Its subcellular location is the endoplasmic reticulum membrane. The protein localises to the golgi apparatus membrane. It is found in the cytoplasmic vesicle. The protein resides in the COPII-coated vesicle membrane. It localises to the nucleus. Its activity is regulated as follows. Activation by cleavage is down-regulated upon activation of SIRT3-dependent PRKAA1/AMPK-alpha signaling cascade which leads to inhibition of ATP-consuming lipogenesis to restore cellular energy balance. Precursor of the transcription factor form (Processed sterol regulatory element-binding protein 1), which is embedded in the endoplasmic reticulum membrane. Low sterol concentrations promote processing of this form, releasing the transcription factor form that translocates into the nucleus and activates transcription of genes involved in cholesterol biosynthesis and lipid homeostasis. In terms of biological role, key transcription factor that regulates expression of genes involved in cholesterol biosynthesis and lipid homeostasis. Binds to the sterol regulatory element 1 (SRE-1) (5'-ATCACCCCAC-3'). Has dual sequence specificity binding to both an E-box motif (5'-ATCACGTGA-3') and to SRE-1 (5'-ATCACCCCAC-3'). Regulates the promoters of genes involved in cholesterol biosynthesis and the LDL receptor (LDLR) pathway of sterol regulation. The chain is Sterol regulatory element-binding protein 1 (SREBF1) from Sus scrofa (Pig).